A 225-amino-acid chain; its full sequence is Respiratory nitrate reductase 1 gamma chain (225 aa).

Met1 carries the N-formylmethionine modification. The Periplasmic segment spans residues 1–3 (MQF). Residues 4–29 (LNMFFFDIYPYIAGAVFLIGSWLRYD) form a helical membrane-spanning segment. At 30–47 (YGQYTWRAASSQMLDRKG) the chain is on the cytoplasmic side. Residues 48–70 (MNLASNLFHIGILGIFVGHFFGM) traverse the membrane as a helical segment. Heme b is bound by residues His56 and His66. Over 71 to 82 (LTPHWMYEAWLP) the chain is Periplasmic. The helical transmembrane segment at 83-112 (IEVKQKMAMFAGGASGVLCLIGGVLLLKRR) threads the bilayer. The Cytoplasmic segment spans residues 113 to 124 (LFSPRVRATTTG). A helical membrane pass occupies residues 125-148 (ADILILSLLVIQCALGLLTIPFSA). The Periplasmic segment spans residues 149-182 (QHMDGSEMMKLVGWAQSVVTFHGGASQHLDGVAF). Residues 183–198 (IFRLHLVLGMTLFLLF) form a helical membrane-spanning segment. Heme b is bound by residues His187 and His205. The Cytoplasmic portion of the chain corresponds to 199-225 (PFSRLIHIWSVPVEYLTRKYQLVRARH).

Dimer of heterotrimers each composed of an alpha, a beta and a gamma chain. Alpha and beta are catalytic chains; gamma chains are involved in binding the enzyme complex to the cytoplasmic membrane. Heme is required as a cofactor.

Its subcellular location is the cell inner membrane. It catalyses the reaction nitrate + a quinol = a quinone + nitrite + H2O. The nitrate reductase enzyme complex allows E.coli to use nitrate as an electron acceptor during anaerobic growth. The gamma chain is a membrane-embedded heme-iron unit resembling cytochrome b, which transfers electrons from quinones to the beta subunit. The sequence is that of Respiratory nitrate reductase 1 gamma chain (narI) from Escherichia coli (strain K12).